The primary structure comprises 314 residues: Epithelial cell adhesion molecule (314 aa).

Positions Met1–Ala23 are cleaved as a signal peptide. Residues Gln24 to Lys265 are Extracellular-facing. Intrachain disulfides connect Cys27-Cys46, Cys29-Cys59, Cys38-Cys48, Cys66-Cys99, Cys110-Cys116, and Cys118-Cys135. In terms of domain architecture, Thyroglobulin type-1 spans Ala63 to Cys135. Residue Asn74 is glycosylated (N-linked (GlcNAc...) asparagine; partial). N-linked (GlcNAc...) asparagine glycosylation is present at Asn111. A glycan (N-linked (GlcNAc...) asparagine) is linked at Asn198. A helical transmembrane segment spans residues Ala266–Ile288. Residues Ser289–Ala314 are Cytoplasmic-facing.

The protein belongs to the EPCAM family. In terms of assembly, monomer. Interacts with phosphorylated CLDN7. Hyperglycosylated in carcinoma tissue as compared with autologous normal epithelia. Glycosylation at Asn-198 is crucial for protein stability. Highly and selectively expressed by undifferentiated rather than differentiated embryonic stem cells (ESC). Levels rapidly diminish as soon as ESC's differentiate (at protein levels). Expressed in almost all epithelial cell membranes but not on mesodermal or neural cell membranes. Found on the surface of adenocarcinoma.

Its subcellular location is the lateral cell membrane. The protein resides in the cell junction. The protein localises to the tight junction. May act as a physical homophilic interaction molecule between intestinal epithelial cells (IECs) and intraepithelial lymphocytes (IELs) at the mucosal epithelium for providing immunological barrier as a first line of defense against mucosal infection. Plays a role in embryonic stem cells proliferation and differentiation. Up-regulates the expression of FABP5, MYC and cyclins A and E. This chain is Epithelial cell adhesion molecule (EPCAM), found in Homo sapiens (Human).